Consider the following 178-residue polypeptide: Small ribosomal subunit protein uS4 (178 aa).

Residues Arg-104–His-166 form the S4 RNA-binding domain. The disordered stretch occupies residues Asn-158–Gln-178.

Belongs to the universal ribosomal protein uS4 family. As to quaternary structure, part of the 30S ribosomal subunit. Contacts protein S5. The interaction surface between S4 and S5 is involved in control of translational fidelity.

One of the primary rRNA binding proteins, it binds directly to 16S rRNA where it nucleates assembly of the body of the 30S subunit. Its function is as follows. With S5 and S12 plays an important role in translational accuracy. The polypeptide is Small ribosomal subunit protein uS4 (Methanococcus maripaludis (strain DSM 14266 / JCM 13030 / NBRC 101832 / S2 / LL)).